The sequence spans 273 residues: Soluble P-type ATPase-like phosphatase (273 aa).

D8 serves as the catalytic 4-aspartylphosphate intermediate.

This sequence belongs to the cation transport ATPase (P-type) (TC 3.A.3) family. Type IB subfamily. Requires Mg(2+) as cofactor.

Inhibited by orthovanadate. Its function is as follows. Most probably acts as a phosphatase in the cytosol. The chain is Soluble P-type ATPase-like phosphatase (patS) from Methanocaldococcus jannaschii (strain ATCC 43067 / DSM 2661 / JAL-1 / JCM 10045 / NBRC 100440) (Methanococcus jannaschii).